Here is a 471-residue protein sequence, read N- to C-terminus: Putative F-box protein At5g36200 (471 aa).

The F-box domain occupies 1–46; it reads MAMSDLPNDLVEEIISRVPVKSIRAVSSTCKNWNTLSNDHSFTRKL.

This is Putative F-box protein At5g36200 from Arabidopsis thaliana (Mouse-ear cress).